We begin with the raw amino-acid sequence, 221 residues long: ATP-dependent dethiobiotin synthetase BioD (221 aa).

11–16 (DVGKTF) provides a ligand contact to ATP. Thr15 contributes to the Mg(2+) binding site. The active site involves Lys35. Position 39 (Thr39) interacts with substrate. Residues Asp44 and 103 to 106 (EGAG) each bind ATP. Positions 44 and 103 each coordinate Mg(2+).

It belongs to the dethiobiotin synthetase family. As to quaternary structure, homodimer. Mg(2+) serves as cofactor.

Its subcellular location is the cytoplasm. It catalyses the reaction (7R,8S)-7,8-diammoniononanoate + CO2 + ATP = (4R,5S)-dethiobiotin + ADP + phosphate + 3 H(+). Its pathway is cofactor biosynthesis; biotin biosynthesis; biotin from 7,8-diaminononanoate: step 1/2. Catalyzes a mechanistically unusual reaction, the ATP-dependent insertion of CO2 between the N7 and N8 nitrogen atoms of 7,8-diaminopelargonic acid (DAPA, also called 7,8-diammoniononanoate) to form a ureido ring. This is ATP-dependent dethiobiotin synthetase BioD from Leptospira interrogans serogroup Icterohaemorrhagiae serovar copenhageni (strain Fiocruz L1-130).